Here is an 839-residue protein sequence, read N- to C-terminus: Autophagy-related protein 9A (839 aa).

The disordered stretch occupies residues 1–20 (MAQFDTEYQRLEASYSDSPP). Residue A2 is modified to N-acetylalanine. Residues 2–61 (AQFDTEYQRLEASYSDSPPGEEDLLVHVAEGSKSPWHHIENLDLFFSRVYNLHQKNGFTC) lie on the Cytoplasmic side of the membrane. Residues 8-11 (YQRL) carry the Tyrosine-based sorting signal motif. 3 positions are modified to phosphoserine: S14, S16, and S18. The chain crosses the membrane as a helical span at residues 62–84 (MLIGEIFELMQFLFVVAFTTFLV). The Lumenal portion of the chain corresponds to 85 to 128 (SCVDYDILFANKMVNHSLHPTEPVKVTLPDAFLPAQVCSARIQE). N99 carries N-linked (GlcNAc...) asparagine glycosylation. A helical transmembrane segment spans residues 129–154 (NGSLITILVIAGVFWIHRLIKFIYNI). Topologically, residues 155 to 290 (CCYWEIHSFY…ELAQRLSNRI (136 aa)) are cytoplasmic. Residues 291–301 (LWIGIANFLLC) lie within the membrane without spanning it. Residues 302 to 319 (PLILIWQILYAFFSYAEV) are Cytoplasmic-facing. The stretch at 320 to 328 (LKREPGALG) is an intramembrane region. The Cytoplasmic portion of the chain corresponds to 329–371 (ARCWSLYGRCYLRHFNELEHELQSRLNRGYKPASKYMNCFLSP). A helical transmembrane segment spans residues 372-397 (LLTLLAKNGAFFAGSILAVLIALTIY). Residues 398-406 (DEDVLAVEH) lie on the Lumenal side of the membrane. The helical transmembrane segment at 407–424 (VLTTVTLLGVTVTVCRSF) threads the bilayer. Residues 425–470 (IPDQHMVFCPEQLLRVILAHIHYMPDHWQGNAHRSQTRDEFAQLFQ) are Cytoplasmic-facing. Residues 471–480 (YKAVFILEEL) lie within the membrane without spanning it. Over 481-483 (LSP) the chain is Cytoplasmic. The stretch at 484 to 492 (IVTPLILIF) is an intramembrane region. The Cytoplasmic segment spans residues 493 to 839 (CLRPRALEII…DELPPQVHKV (347 aa)). Phosphoserine is present on residues S656, S735, S738, S741, and S828. Disordered stretches follow at residues 656-686 (SPLQ…SSGS) and 719-839 (QQAQ…VHKV). The segment covering 724–736 (EPERHLWHRRESD) has biased composition (basic and acidic residues). 2 stretches are compositionally biased toward acidic residues: residues 737–747 (ESGESAPDEGG) and 823–832 (VPEEGSEDEL).

Belongs to the ATG9 family. In terms of assembly, homotrimer; forms a homotrimer with a central pore that forms a path between the two membrane leaflets. Interacts (via cytoplasmic its C-terminus) with ATG2A. Interacts with SUPT20H. Interacts (via the tyrosine-based sorting signal motif) with AP4M1; promoting association with the AP-4 complex. Interacts with ARFIP1 and ARFIP2. Interacts with PI4K2A and PI4KB. Interacts with ATG4A; the interaction is direct and promotes ATG9A trafficking. In terms of processing, ufmylated in a DDRGK1 dependent manner.

It is found in the preautophagosomal structure membrane. The protein localises to the cytoplasmic vesicle. Its subcellular location is the autophagosome membrane. It localises to the golgi apparatus. The protein resides in the trans-Golgi network membrane. It is found in the late endosome membrane. The protein localises to the recycling endosome membrane. Its subcellular location is the endoplasmic reticulum membrane. It localises to the mitochondrion membrane. It catalyses the reaction a 1,2-diacyl-sn-glycero-3-phosphocholine(in) = a 1,2-diacyl-sn-glycero-3-phosphocholine(out). It carries out the reaction a 1,2-diacyl-sn-glycero-3-phospho-L-serine(in) = a 1,2-diacyl-sn-glycero-3-phospho-L-serine(out). The catalysed reaction is a 1,2-diacyl-sn-glycero-3-phosphoethanolamine(in) = a 1,2-diacyl-sn-glycero-3-phosphoethanolamine(out). Phospholipid scramblase involved in autophagy by mediating autophagosomal membrane expansion. Cycles between the preautophagosomal structure/phagophore assembly site (PAS) and the cytoplasmic vesicle pool and supplies membrane for the growing autophagosome. Lipid scramblase activity plays a key role in preautophagosomal structure/phagophore assembly by distributing the phospholipids that arrive through ATG2 (ATG2A or ATG2B) from the cytoplasmic to the luminal leaflet of the bilayer, thereby driving autophagosomal membrane expansion. Also required to supply phosphatidylinositol 4-phosphate to the autophagosome initiation site by recruiting the phosphatidylinositol 4-kinase beta (PI4KB) in a process dependent on ARFIP2, but not ARFIP1. In addition to autophagy, also plays a role in necrotic cell death. This is Autophagy-related protein 9A from Pongo abelii (Sumatran orangutan).